A 417-amino-acid chain; its full sequence is Acid phosphatase (417 aa).

The signal sequence occupies residues 1–19 (MFTKQSLVTLLGGLSLAVA). N-linked (GlcNAc...) asparagine glycosylation is found at N122, N187, and N209. The Proton donor role is filled by D216. 3 N-linked (GlcNAc...) asparagine glycosylation sites follow: N218, N333, and N383.

Post-translationally, the N-terminus is blocked.

It localises to the secreted. The enzyme catalyses a phosphate monoester + H2O = an alcohol + phosphate. The polypeptide is Acid phosphatase (phoA) (Aspergillus niger).